The primary structure comprises 322 residues: MSSLGGGSQDAGGSSSSSTNGSGGSGSSGPKAGAADKSAVVAAATPASVADDTPPPERRNKSGIISEPLNKSLRRSRPLSHYSSFGSSGGSGGGSMMGGESADKATAAAAAASLLANGHDLAAAMAVDKSNPTSKHKSGAVASLLSKAERATELAAEGQLTLQQFAQSTEMLKRVVQEHLPLMSEAGAGLPDMEAVAGAEALNGQSDFPYLGAFPINPGLFIMTPAGVFLAESALHMAGLAEYPMQGELASAISSGKKKRKRCGMCAPCRRRINCEQCSSCRNRKTGHQICKFRKCEELKKKPSAALEKVMLPTGAAFRWFQ.

Residues 1–10 (MSSLGGGSQD) are compositionally biased toward gly residues. Positions 1–100 (MSSLGGGSQD…SGGGSMMGGE (100 aa)) are disordered. 2 stretches are compositionally biased toward low complexity: residues 11–20 (AGGSSSSSTN) and 28–52 (SGPK…VADD). Phosphothreonine is present on threonine 53. Over residues 87–97 (SSGGSGGGSMM) the composition is skewed to gly residues. The CXXC-type zinc-finger motif lies at 256–297 (GKKKRKRCGMCAPCRRRINCEQCSSCRNRKTGHQICKFRKCE). Positions 257–262 (KKKRKR) match the Nuclear localization signal motif. Zn(2+) contacts are provided by cysteine 263, cysteine 266, cysteine 269, cysteine 275, cysteine 278, cysteine 281, cysteine 291, and cysteine 296.

In terms of assembly, interacts with DVL1. Interacts with RBPJ.

It localises to the nucleus. The protein resides in the cytoplasm. In terms of biological role, may indirectly participate in activation of the NF-kappa-B and MAPK pathways. Acts as a mediator of BMP4-mediated modulation of canonical Wnt signaling activity in neural stem cells. Required for DNA damage-induced ATM phosphorylation, p53 activation and cell cycle arrest. Involved in myelopoiesis. Binds to the oxygen responsive element of COX4I2 and represses its transcription under hypoxia conditions (4% oxygen), as well as normoxia conditions (20% oxygen). May repress COX4I2 transactivation induced by CHCHD2 and RBPJ. Binds preferentially to DNA containing cytidine-phosphate-guanosine (CpG) dinucleotides over CpH (H=A, T, and C), hemimethylated-CpG and hemimethylated-hydroxymethyl-CpG. This chain is CXXC-type zinc finger protein 5 (CXXC5), found in Pongo abelii (Sumatran orangutan).